The sequence spans 142 residues: Hemoglobin subunit alpha (142 aa).

One can recognise a Globin domain in the interval 2-142; it reads VLSPADKSNV…VSTVLTSKYR (141 aa). The residue at position 4 (Ser-4) is a Phosphoserine. Lys-8 and Lys-12 each carry N6-succinyllysine. Lys-17 is subject to N6-acetyllysine; alternate. An N6-succinyllysine; alternate modification is found at Lys-17. Phosphotyrosine is present on Tyr-25. A Phosphoserine modification is found at Ser-36. Residue Lys-41 is modified to N6-succinyllysine. Position 50 is a phosphoserine (Ser-50). Position 59 (His-59) interacts with O2. His-88 contributes to the heme b binding site. A Phosphoserine modification is found at Ser-103. Residue Thr-109 is modified to Phosphothreonine. Phosphoserine occurs at positions 125 and 132. Thr-135 and Thr-138 each carry phosphothreonine. Ser-139 is modified (phosphoserine).

Belongs to the globin family. As to quaternary structure, heterotetramer of two alpha chains and two beta chains. As to expression, red blood cells.

Its function is as follows. Involved in oxygen transport from the lung to the various peripheral tissues. Functionally, hemopressin acts as an antagonist peptide of the cannabinoid receptor CNR1. Hemopressin-binding efficiently blocks cannabinoid receptor CNR1 and subsequent signaling. The sequence is that of Hemoglobin subunit alpha (HBA) from Macaca fuscata fuscata (Japanese macaque).